We begin with the raw amino-acid sequence, 266 residues long: MKAVVLTLAVLFLTGSQARHFWQQDEPQSPWDRVKDLATVYVDAIKDSGRDYVSQFEASALGKQLNLKLLDNWDSLTTSFSKLREQLGPVTQEFWDNLEKETEALRQEMNKDVEEMKTKVQPYLDEFQKKWQEEVELYRQKVEPLGSELREGARQKLQELQEKLSPLGEELRDRARTHVDSLRTQLAPYSEELRQRLASRLEALKESGGASLADYHAKASEQLSALSEKAKPALEDLRQGLLPVLESFKVSLLSALEEASKKLNAQ.

The signal sequence occupies residues 1 to 18 (MKAVVLTLAVLFLTGSQA). 2 repeat units span residues 67–88 (LKLL…EQLG) and 89–110 (PVTQ…QEMN). The tract at residues 67–266 (LKLLDNWDSL…EEASKKLNAQ (200 aa)) is 10 X approximate tandem repeats. Met-109 carries the post-translational modification Methionine sulfoxide. Residues 111 to 121 (KDVEEMKTKVQ) form a 3; half-length repeat. 5 repeat units span residues 122-143 (PYLD…QKVE), 144-165 (PLGS…EKLS), 166-187 (PLGE…TQLA), 188-209 (PYSE…ESGG), and 210-231 (ASLA…EKAK). The stretch at 232–242 (PALEDLRQGLL) is one 9; half-length repeat. Copy 10 of the repeat occupies 243 to 266 (PVLESFKVSLLSALEEASKKLNAQ).

The protein belongs to the apolipoprotein A1/A4/E family. In terms of assembly, homodimer. Interacts with APOA1BP and CLU. Component of a sperm activating protein complex (SPAP), consisting of APOA1, an immunoglobulin heavy chain, an immunoglobulin light chain and albumin. Interacts with NDRG1. Interacts with SCGB3A2. Interacts with NAXE and YJEFN3. Post-translationally, glycosylated. Palmitoylated. In terms of processing, phosphorylation sites are present in the extracellular medium. As to expression, major protein of plasma HDL, also found in chylomicrons.

It is found in the secreted. Functionally, participates in the reverse transport of cholesterol from tissues to the liver for excretion by promoting cholesterol efflux from tissues and by acting as a cofactor for the lecithin cholesterol acyltransferase (LCAT). As part of the SPAP complex, activates spermatozoa motility. The protein is Apolipoprotein A-I (APOA1) of Carlito syrichta (Philippine tarsier).